Here is a 1047-residue protein sequence, read N- to C-terminus: Cation efflux system protein CusA (1047 aa).

12 consecutive transmembrane segments (helical) span residues 14-34 (FLVL…IINT), 338-358 (LSGK…LFLW), 363-383 (ALVA…VMHF), 391-411 (MSLG…IVMI), 446-466 (VGPA…PIFT), 485-505 (AMAG…GYWI), 532-552 (VLHW…TVLW), 871-891 (KLKL…YLAF), 898-918 (LLII…LWWM), 928-948 (TGFI…LMYL), 985-1005 (AMTV…TGAG), and 1012-1032 (IAAP…FIIP).

This sequence belongs to the resistance-nodulation-cell division (RND) (TC 2.A.6) family. In terms of assembly, the cus efflux system is composed of CusA, CusB, CusC and CusF.

It is found in the cell inner membrane. Its function is as follows. Part of a cation efflux system that mediates resistance to copper and silver. This Escherichia coli (strain K12) protein is Cation efflux system protein CusA (cusA).